The primary structure comprises 1325 residues: Clustered mitochondria protein homolog (1325 aa).

The Clu domain occupies 311–573 (PKHESDPMRT…RHTPMDVTWL (263 aa)). 3 disordered regions span residues 893 to 937 (KHAE…PLRT), 1032 to 1063 (DSNQ…DDQL), and 1245 to 1325 (QHAR…AKRS). The span at 1265–1275 (SAHHHHHRHLH) shows a compositional bias: basic residues. Positions 1276 to 1285 (QQQQNSSSSP) are enriched in low complexity. A compositionally biased stretch (basic residues) spans 1314–1325 (AARKRAARAKRS).

Belongs to the CLU family. May associate with the eukaryotic translation initiation factor 3 (eIF-3) complex.

Its subcellular location is the cytoplasm. In terms of biological role, mRNA-binding protein involved in proper cytoplasmic distribution of mitochondria. This is Clustered mitochondria protein homolog from Malassezia globosa (strain ATCC MYA-4612 / CBS 7966) (Dandruff-associated fungus).